Consider the following 623-residue polypeptide: Chaperone protein DnaK (623 aa).

Residue Thr-197 is modified to Phosphothreonine; by autocatalysis. Residues 595–615 (AENMYKKDEPNTANDKKKKDD) show a composition bias toward basic and acidic residues. The disordered stretch occupies residues 595–623 (AENMYKKDEPNTANDKKKKDDDVIDAEVE).

This sequence belongs to the heat shock protein 70 family.

Its function is as follows. Acts as a chaperone. The sequence is that of Chaperone protein DnaK from Campylobacter jejuni subsp. jejuni serotype O:6 (strain 81116 / NCTC 11828).